The sequence spans 1756 residues: Protein TIC 214 (1756 aa).

The next 6 membrane-spanning stretches (helical) occupy residues 18-38, 54-74, 79-99, 128-148, 163-183, and 210-230; these read VSGPIIIFGLYYGFLATLPFG, GYGIIAISGSITGQLIGFLSM, IYAALWKPYAITLLVVPYMFF, LFMDGLILQLLNPILLANPVL, ISFMISGLCGWLGGHILLTIF, and FSLLILCYCSFYLGRAPLPFL. Residues 1469-1504 form a disordered region; the sequence is KNKQVEDGQDKNGQVEDQDGQDQDGQVEDQQTDGKK. The span at 1471–1482 shows a compositional bias: basic and acidic residues; the sequence is KQVEDGQDKNGQ. The span at 1484-1499 shows a compositional bias: acidic residues; it reads EDQDGQDQDGQVEDQQ.

It belongs to the TIC214 family. As to quaternary structure, part of the Tic complex.

The protein localises to the plastid. The protein resides in the chloroplast inner membrane. Functionally, involved in protein precursor import into chloroplasts. May be part of an intermediate translocation complex acting as a protein-conducting channel at the inner envelope. The sequence is that of Protein TIC 214 from Pinus thunbergii (Japanese black pine).